Consider the following 275-residue polypeptide: NH(3)-dependent NAD(+) synthetase (275 aa).

46-53 (GISGGQDS) contributes to the ATP binding site. Asp-52 contacts Mg(2+). Position 140 (Arg-140) interacts with deamido-NAD(+). Thr-160 serves as a coordination point for ATP. A Mg(2+)-binding site is contributed by Glu-165. Residues Lys-173 and Asp-180 each contribute to the deamido-NAD(+) site. 2 residues coordinate ATP: Lys-189 and Thr-211. 260–261 (HK) is a binding site for deamido-NAD(+).

It belongs to the NAD synthetase family. As to quaternary structure, homodimer.

It carries out the reaction deamido-NAD(+) + NH4(+) + ATP = AMP + diphosphate + NAD(+) + H(+). It functions in the pathway cofactor biosynthesis; NAD(+) biosynthesis; NAD(+) from deamido-NAD(+) (ammonia route): step 1/1. Functionally, catalyzes the ATP-dependent amidation of deamido-NAD to form NAD. Uses ammonia as a nitrogen source. In Shigella boydii serotype 4 (strain Sb227), this protein is NH(3)-dependent NAD(+) synthetase.